A 260-amino-acid polypeptide reads, in one-letter code: UPF0246 protein Cbei_1739 (260 aa).

Belongs to the UPF0246 family.

In Clostridium beijerinckii (strain ATCC 51743 / NCIMB 8052) (Clostridium acetobutylicum), this protein is UPF0246 protein Cbei_1739.